The primary structure comprises 408 residues: (R)-2-hydroxyisocaproyl-CoA dehydratase alpha subunit (408 aa).

Substrate is bound at residue Glu55. [4Fe-4S] cluster is bound by residues Cys84, Cys117, and Cys346.

Belongs to the FldB/FldC dehydratase alpha/beta subunit family. In terms of assembly, part of the heterodimeric complex HadBC composed of (R)-2-hydroxyisocaproyl-CoA dehydratase alpha (HadB) and beta (HadC) subunit. It depends on [4Fe-4S] cluster as a cofactor.

It catalyses the reaction (R)-2-hydroxy-4-methylpentanoyl-CoA = 4-methylpent-2-enoyl-CoA + H2O. With respect to regulation, activated by HadI. In terms of biological role, involved in the reductive branch of L-leucine fermentation. Catalyzes the irreversible beta/alpha-elimination of water from (R)-2-hydroxyisocaproyl-CoA to yield isocaprenoyl-CoA. This beta/alpha-dehydration depends on the reductive formation of ketyl radicals on the substrate generated by injection of a single electron from the ATP-dependent activator protein HadI. The enzyme is specific for the R-isomer. This chain is (R)-2-hydroxyisocaproyl-CoA dehydratase alpha subunit, found in Clostridioides difficile (Peptoclostridium difficile).